The chain runs to 248 residues: Proteasome subunit alpha type-3 (248 aa).

It belongs to the peptidase T1A family. As to quaternary structure, the 26S proteasome consists of a 20S proteasome core and two 19S regulatory subunits. The 20S proteasome core is composed of 28 subunits that are arranged in four stacked rings, resulting in a barrel-shaped structure. The two end rings are each formed by seven alpha subunits, and the two central rings are each formed by seven beta subunits. The catalytic chamber with the active sites is on the inside of the barrel.

The protein resides in the cytoplasm. It localises to the nucleus. The proteasome is a multicatalytic proteinase complex which is characterized by its ability to cleave peptides with Arg, Phe, Tyr, Leu, and Glu adjacent to the leaving group at neutral or slightly basic pH. The proteasome has an ATP-dependent proteolytic activity. This Dictyostelium discoideum (Social amoeba) protein is Proteasome subunit alpha type-3 (psmA3).